Reading from the N-terminus, the 82-residue chain is Omega-ctenitoxin-Pn1a (82 aa).

The N-terminal stretch at 1 to 21 (MWLKIQVFLLAITLITLGIQA) is a signal peptide. A propeptide spanning residues 22–37 (EPNSSPNNPLIEEEAR) is cleaved from the precursor. Intrachain disulfides connect cysteine 39-cysteine 54, cysteine 46-cysteine 59, cysteine 53-cysteine 70, and cysteine 61-cysteine 68. Positions 72–82 (KKFIEFFGGGK) are excised as a propeptide.

The protein belongs to the neurotoxin 02 (plectoxin) family. In terms of tissue distribution, expressed by the venom gland.

It is found in the secreted. Antagonist of L-type calcium channels (Cav1/CACNA1). Induces immediate clockwise gyration and flaccid paralysis after 6 hours at dose levels of 5 ug per mouse. This Phoneutria nigriventer (Brazilian armed spider) protein is Omega-ctenitoxin-Pn1a.